A 97-amino-acid chain; its full sequence is Large ribosomal subunit protein bL28 (97 aa).

This sequence belongs to the bacterial ribosomal protein bL28 family.

In Bartonella henselae (strain ATCC 49882 / DSM 28221 / CCUG 30454 / Houston 1) (Rochalimaea henselae), this protein is Large ribosomal subunit protein bL28.